A 215-amino-acid polypeptide reads, in one-letter code: Large ribosomal subunit protein uL3 (215 aa).

A disordered region spans residues 134-166; the sequence is MAHGSKNHRAPGSIGAGTTPGRVFPGKRMPGRM.

The protein belongs to the universal ribosomal protein uL3 family. As to quaternary structure, part of the 50S ribosomal subunit. Forms a cluster with proteins L14 and L19.

One of the primary rRNA binding proteins, it binds directly near the 3'-end of the 23S rRNA, where it nucleates assembly of the 50S subunit. This Gloeobacter violaceus (strain ATCC 29082 / PCC 7421) protein is Large ribosomal subunit protein uL3.